The primary structure comprises 174 residues: Ribosome maturation factor RimM (174 aa).

The PRC barrel domain occupies E98–L171.

This sequence belongs to the RimM family. Binds ribosomal protein uS19.

The protein resides in the cytoplasm. An accessory protein needed during the final step in the assembly of 30S ribosomal subunit, possibly for assembly of the head region. Essential for efficient processing of 16S rRNA. May be needed both before and after RbfA during the maturation of 16S rRNA. It has affinity for free ribosomal 30S subunits but not for 70S ribosomes. The protein is Ribosome maturation factor RimM of Bacillus licheniformis (strain ATCC 14580 / DSM 13 / JCM 2505 / CCUG 7422 / NBRC 12200 / NCIMB 9375 / NCTC 10341 / NRRL NRS-1264 / Gibson 46).